A 122-amino-acid chain; its full sequence is Conotoxin flf14c (122 aa).

The N-terminal stretch at 1 to 22 (MGFRVLVLIVMVTTSALPFTFS) is a signal peptide. A propeptide spanning residues 23-96 (EESGRSPFRP…AESPVGQKRW (74 aa)) is cleaved from the precursor. Positions 53–89 (RADGQTPDMHQPEMRRPEMRRPEVRRPEVRQPEFAES) are disordered. The segment covering 62 to 85 (HQPEMRRPEMRRPEVRRPEVRQPE) has biased composition (basic and acidic residues). Cystine bridges form between Cys101–Cys121 and Cys105–Cys117.

In terms of tissue distribution, expressed by the venom duct.

It is found in the secreted. This chain is Conotoxin flf14c, found in Conus anabathrum floridanus (Florida cone).